Here is a 553-residue protein sequence, read N- to C-terminus: PE cleavage protein A (553 aa).

Residues 1 to 92 (MSLLVVAPEW…SAGSYSAAEA (92 aa)) enclose the PE domain. Asp-293 is an active-site residue.

It belongs to the mycobacterial PE family. PGRS subfamily. Post-translationally, undergoes auto-proteolytic processing.

It is found in the secreted. The protein localises to the cell surface. In terms of biological role, aspartic protease that processes the lipase LipY and other PE_PGRS proteins. Can also cleave itself. Cleaves LipY both inside the PE domain, before amino acid 98, and after amino acids 136 and 149. Involved in virulence. The protein is PE cleavage protein A of Mycobacterium marinum (strain ATCC BAA-535 / M).